The primary structure comprises 116 residues: Dynein light chain Tctex-type 3 (116 aa).

Position 4 is a 3'-nitrotyrosine (Tyr-4).

This sequence belongs to the dynein light chain Tctex-type family. Homodimer. The cytoplasmic dynein 1 complex consists of two catalytic heavy chains (HCs) and a number of non-catalytic subunits presented by intermediate chains (ICs), light intermediate chains (LICs) and light chains (LCs); the composition seems to vary in respect to the IC, LIC and LC composition. The heavy chain homodimer serves as a scaffold for the probable homodimeric assembly of the respective non-catalytic subunits. The ICs and LICs bind directly to the HC dimer and the LCs assemble on the IC dimer. DYNLT1 and DYNLT3 compete for association with dynein IC (DYNC1I1 or DYNC1I2). Self-associates. Interacts with DYNC1I1 and DYNC1I2. Interacts with BUB3. Interacts with SATB1 in nucleus to form complex with matrix attachment regions (MARs) of DNA.

It is found in the nucleus. The protein resides in the cytoplasm. It localises to the cytoskeleton. The protein localises to the chromosome. Its subcellular location is the centromere. It is found in the kinetochore. Its function is as follows. Acts as one of several non-catalytic accessory components of the cytoplasmic dynein 1 complex that are thought to be involved in linking dynein to cargos and to adapter proteins that regulate dynein function. Cytoplasmic dynein 1 acts as a motor for the intracellular retrograde motility of vesicles and organelles along microtubules. Probably binds BUB3 as part of transport cargo. Required for the efficient progression through mitosis. This Canis lupus familiaris (Dog) protein is Dynein light chain Tctex-type 3 (DYNLT3).